Consider the following 92-residue polypeptide: MAYRGQAQKVQKVMVQPINLIFRYLQNRSRIQVWLYEQVNMRIEGCIIGFDEYMNLVLDDAEEIHSKTKSRKQLGRIMLKGDNITLLQSVSN.

The Sm domain maps to 18–92 (INLIFRYLQN…NITLLQSVSN (75 aa)).

The protein belongs to the snRNP Sm proteins family. In terms of assembly, core component of the spliceosomal U1, U2, U4 and U5 small nuclear ribonucleoproteins (snRNPs), the building blocks of the spliceosome. Most spliceosomal snRNPs contain a common set of Sm proteins, SNRPB, SNRPD1, SNRPD2, SNRPD3, SNRPE, SNRPF and SNRPG that assemble in a heptameric protein ring on the Sm site of the small nuclear RNA to form the core snRNP. Component of the U1 snRNP. The U1 snRNP is composed of the U1 snRNA and the 7 core Sm proteins SNRPB, SNRPD1, SNRPD2, SNRPD3, SNRPE, SNRPF and SNRPG, and at least three U1 snRNP-specific proteins SNRNP70/U1-70K, SNRPA/U1-A and SNRPC/U1-C. Component of the U4/U6-U5 tri-snRNP complex composed of the U4, U6 and U5 snRNAs and at least PRPF3, PRPF4, PRPF6, PRPF8, PRPF31, SNRNP200, TXNL4A, SNRNP40, SNRPB, SNRPD1, SNRPD2, SNRPD3, SNRPE, SNRPF, SNRPG, DDX23, CD2BP2, PPIH, SNU13, EFTUD2, SART1 and USP39, plus LSM2, LSM3, LSM4, LSM5, LSM6, LSM7 and LSM8. Component of the U7 snRNP complex, or U7 Sm protein core complex, that is composed of the U7 snRNA and at least LSM10, LSM11, SNRPB, SNRPD3, SNRPE, SNRPF and SNRPG; the complex does not contain SNRPD1 and SNRPD2. Component of the minor spliceosome, which splices U12-type introns. Part of the SMN-Sm complex that contains SMN1, GEMIN2/SIP1, DDX20/GEMIN3, GEMIN4, GEMIN5, GEMIN6, GEMIN7, GEMIN8, STRAP/UNRIP and the Sm proteins SNRPB, SNRPD1, SNRPD2, SNRPD3, SNRPE, SNRPF and SNRPG; catalyzes core snRNPs assembly. Forms a 6S pICln-Sm complex composed of CLNS1A/pICln, SNRPD1, SNRPD2, SNRPE, SNRPF and SNRPG; ring-like structure where CLNS1A/pICln mimics additional Sm proteins and which is unable to assemble into the core snRNP. Interacts with SMN1; the interaction is direct. Interacts with GEMIN2 (via N-terminus); the interaction is direct. Interacts with SNRPF; the interaction is direct. Interacts with SNRPG; the interaction is direct.

It localises to the cytoplasm. It is found in the cytosol. The protein resides in the nucleus. Functionally, plays a role in pre-mRNA splicing as a core component of the spliceosomal U1, U2, U4 and U5 small nuclear ribonucleoproteins (snRNPs), the building blocks of the spliceosome. Component of both the pre-catalytic spliceosome B complex and activated spliceosome C complexes. As a component of the minor spliceosome, involved in the splicing of U12-type introns in pre-mRNAs. As part of the U7 snRNP it is involved in histone 3'-end processing. In Sus scrofa (Pig), this protein is Small nuclear ribonucleoprotein E (SNRPE).